The following is a 335-amino-acid chain: Cytoskeleton protein RodZ (335 aa).

Over 1-111 the chain is Cytoplasmic; the sequence is MNTEATHDQN…LGKRRKKRDG (111 aa). In terms of domain architecture, HTH cro/C1-type spans 19–71; it reads LRNAREQLGLSQQAVAERLCLKVSTVRDIEEDKAPADLASTFLRGYIRSYARL. A DNA-binding region (H-T-H motif) is located at residues 30 to 49; that stretch reads QQAVAERLCLKVSTVRDIEE. Residues 112 to 132 form a helical; Signal-anchor for type II membrane protein membrane-spanning segment; sequence WLMTFTWLVLFVVIGLSGAWW. At 133–335 the chain is on the periplasmic side; sequence WQDHKAQQEE…TLNAEQSPAQ (203 aa). Residues 148–164 show a composition bias toward polar residues; the sequence is DQSSAELNNNQSQSVPL. The segment at 148 to 244 is disordered; sequence DQSSAELNNN…PLPTDQAGVT (97 aa). 2 stretches are compositionally biased toward low complexity: residues 165-205 and 217-239; these read DTST…DPQQ and DTAA…LPTD.

It belongs to the RodZ family.

The protein localises to the cell inner membrane. In terms of biological role, cytoskeletal protein that is involved in cell-shape control through regulation of the length of the long axis. This Escherichia coli O127:H6 (strain E2348/69 / EPEC) protein is Cytoskeleton protein RodZ.